The primary structure comprises 75 residues: DNA-directed RNA polymerase subunit omega (75 aa).

This sequence belongs to the RNA polymerase subunit omega family. As to quaternary structure, the RNAP catalytic core consists of 2 alpha, 1 beta, 1 beta' and 1 omega subunit. When a sigma factor is associated with the core the holoenzyme is formed, which can initiate transcription.

It carries out the reaction RNA(n) + a ribonucleoside 5'-triphosphate = RNA(n+1) + diphosphate. Promotes RNA polymerase assembly. Latches the N- and C-terminal regions of the beta' subunit thereby facilitating its interaction with the beta and alpha subunits. This is DNA-directed RNA polymerase subunit omega from Nitratidesulfovibrio vulgaris (strain DSM 19637 / Miyazaki F) (Desulfovibrio vulgaris).